The chain runs to 112 residues: Carboxysome shell protein CcmK4 (112 aa).

The BMC domain occupies A6–P92.

The protein belongs to the bacterial microcompartments protein family. CcmK subfamily. As to quaternary structure, homohexamer. Interacts with full-length CcmM. Forms mixed heterohexamers with CcmK3, probably with 1:5 CcmK3:CcmK4 stoichiometry. Only very weak interactions with CcmK1 and CcmK2 were seen.

The protein resides in the carboxysome. A probably minor shell protein component of the carboxysome, a polyhedral inclusion where RuBisCO (ribulose bisphosphate carboxylase, rbcL-rbcS) is sequestered. The central pore probably regulates metabolite flux, as might the gaps between assembled homohexamers. Homohexamers make sheets that probably form the facets of the polyhedral carboxysome. This subunit probably makes both homohexamers and heterohexamers with CcmK3. This Synechocystis sp. (strain ATCC 27184 / PCC 6803 / Kazusa) protein is Carboxysome shell protein CcmK4.